Here is a 302-residue protein sequence, read N- to C-terminus: Mitochondrial glycine transporter (302 aa).

3 Solcar repeats span residues 22–112 (HPVF…LKHH), 119–203 (PKPL…AKKL), and 213–297 (FSPV…MMEK). A run of 6 helical transmembrane segments spans residues 28-53 (FVCG…TRLQ), 87-113 (GVSP…KHHF), 125-150 (VMLG…TRYE), 178-201 (GLTA…TRAK), 217-243 (LNFG…KTHI), and 272-290 (GGLP…AWTV).

Belongs to the mitochondrial carrier (TC 2.A.29) family. SLC25A38 subfamily.

Its subcellular location is the mitochondrion inner membrane. It carries out the reaction glycine(in) = glycine(out). Functionally, mitochondrial glycine transporter that imports glycine into the mitochondrial matrix. Plays an important role in providing glycine for the first enzymatic step in heme biosynthesis, the condensation of glycine with succinyl-CoA to produce 5-aminolevulinate (ALA) in the mitochondrial matrix. Required during erythropoiesis. In terms of biological role, may play a role as pro-apoptotic protein that induces caspase-dependent apoptosis. The chain is Mitochondrial glycine transporter from Xenopus tropicalis (Western clawed frog).